Here is a 663-residue protein sequence, read N- to C-terminus: MSARLPVLSPPRWPRLLLLSLLLLGAVPGPRRSGGFYLPGLAPVNFCDEEKKSDECKAEIELFVNRLDSVESVLPYEYTAFDFCQASEGKRPSENLGQVLFGERIEPSPYKFTFNKEETCKLVCTKTYHTEKAEDKQKLEFLKKSMLLNYQHHWIVDNMPVTWCYDVEDGQRFCNPGFPIGCYITDKGHAKDACVINSEFHERDTFYIFNHVDIKIYYHVVETGSMGARLVAAKLEPKSFKHTHIDKPDCSGPPMDISNKASGEIKIAYTYSVSFEEDKKIRWASRWDYILESMPHTHIQWFSIMNSLVIVLFLSGMVAMIMLRTLHKDIARYNQMDSTEDAQEEFGWKLVHGDIFRPPRKGMLLSVFLGSGTQILIMTFVTLFFACLGFLSPANRGALMTCAVVLWVLLGTPAGYVAARFYKSFGGEKWKTNVLLTSFLCPGIVFADFFIMNLILWGEGSSAAIPFGTLVAILALWFCISVPLTFIGAYFGFKKNAIEHPVRTNQIPRQIPEQSFYTKPLPGIIMGGILPFGCIFIQLFFILNSIWSHQMYYMFGFLFLVFIILVITCSEATILLCYFHLCAEDYHWQWRSFLTSGFTAVYFLIYAVHYFFSKLQITGTASTILYFGYTMIMVLIFFLFTGTIGFFACFWFVTKIYSVVKVD.

The N-terminal stretch at 1–28 is a signal peptide; the sequence is MSARLPVLSPPRWPRLLLLSLLLLGAVP. Residues 29–300 lie on the Lumenal side of the membrane; it reads GPRRSGGFYL…LESMPHTHIQ (272 aa). A helical transmembrane segment spans residues 301-321; the sequence is WFSIMNSLVIVLFLSGMVAMI. The Cytoplasmic segment spans residues 322–374; it reads MLRTLHKDIARYNQMDSTEDAQEEFGWKLVHGDIFRPPRKGMLLSVFLGSGTQ. The helical transmembrane segment at 375 to 395 threads the bilayer; the sequence is ILIMTFVTLFFACLGFLSPAN. The Lumenal portion of the chain corresponds to 396–398; that stretch reads RGA. The helical transmembrane segment at 399 to 419 threads the bilayer; the sequence is LMTCAVVLWVLLGTPAGYVAA. Residues 420–437 lie on the Cytoplasmic side of the membrane; the sequence is RFYKSFGGEKWKTNVLLT. The helical transmembrane segment at 438–458 threads the bilayer; the sequence is SFLCPGIVFADFFIMNLILWG. The Lumenal portion of the chain corresponds to 459-466; sequence EGSSAAIP. A helical membrane pass occupies residues 467–487; that stretch reads FGTLVAILALWFCISVPLTFI. At 488–522 the chain is on the cytoplasmic side; it reads GAYFGFKKNAIEHPVRTNQIPRQIPEQSFYTKPLP. The helical transmembrane segment at 523–543 threads the bilayer; sequence GIIMGGILPFGCIFIQLFFIL. Residues 544-554 lie on the Lumenal side of the membrane; that stretch reads NSIWSHQMYYM. The helical transmembrane segment at 555–575 threads the bilayer; the sequence is FGFLFLVFIILVITCSEATIL. Topologically, residues 576–591 are cytoplasmic; sequence LCYFHLCAEDYHWQWR. Residues 592–612 traverse the membrane as a helical segment; the sequence is SFLTSGFTAVYFLIYAVHYFF. The Lumenal portion of the chain corresponds to 613-631; the sequence is SKLQITGTASTILYFGYTM. The chain crosses the membrane as a helical span at residues 632–652; the sequence is IMVLIFFLFTGTIGFFACFWF. At 653–663 the chain is on the cytoplasmic side; that stretch reads VTKIYSVVKVD.

It belongs to the nonaspanin (TM9SF) (TC 9.A.2) family.

It is found in the endosome membrane. It localises to the golgi outpost. The protein resides in the cytoplasm. The protein localises to the cytoskeleton. Its subcellular location is the microtubule organizing center. Its function is as follows. In the intracellular compartments, may function as a channel or small molecule transporter. In Pongo abelii (Sumatran orangutan), this protein is Transmembrane 9 superfamily member 2 (TM9SF2).